The primary structure comprises 1292 residues: (E3-independent) E2 ubiquitin-conjugating enzyme (1292 aa).

Residues 1-37 (MADPAAPTPAAPAPAQAPAPAPEAVPAPAAAPVPAPA) are compositionally biased toward pro residues. Disordered stretches follow at residues 1-56 (MADP…EAGS) and 85-114 (EDSD…EGRA). Over residues 38 to 56 (PASDSASGPSSDSGPEAGS) the composition is skewed to low complexity. 5 positions are modified to phosphoserine: S50, S87, S89, S399, and S401. Disordered regions lie at residues 401–459 (SPDT…AGEQ), 472–519 (RLHS…IPLS), and 714–746 (IEES…TDNG). The span at 406–427 (CSRDHSMEDPDKKGESKTKSEA) shows a compositional bias: basic and acidic residues. Position 441 is a phosphoserine (S441). Positions 478–490 (QDADDEAADDTDD) are enriched in acidic residues. Phosphothreonine occurs at positions 488 and 491. A compositionally biased stretch (low complexity) spans 491-510 (TSSVTSSASSTTSSQSGSGT). The Nuclear localization signal signature appears at 512 to 536 (RKKSIPLSIKNLKRKHKRKKNKITR). S515 carries the phosphoserine modification. Acidic residues predominate over residues 732–742 (DEWEDDSDSWE). Positions 812–882 (RELKEAIKIL…IVEEEKMEAV (71 aa)) form a coiled coil. At S836 the chain carries Phosphoserine. At T838 the chain carries Phosphothreonine. Phosphoserine is present on S839. Basic and acidic residues predominate over residues 882-893 (VPDVERKEDKPE). Positions 882–903 (VPDVERKEDKPEGQSPVKAEWP) are disordered. The residue at position 896 (S896) is a Phosphoserine. Residues 953 to 1113 (KFFSTVRKEM…ALIRVVQSMT (161 aa)) form the UBC core domain. The active-site Glycyl thioester intermediate is the C1040. The disordered stretch occupies residues 1160 to 1248 (NGVPKASSSP…KSYRSFLPEK (89 aa)).

It belongs to the ubiquitin-conjugating enzyme family. In terms of assembly, interacts with CPNE1 (via VWFA domain) and CPNE4 (via VWFA domain). Interacts with UBR2. Phosphorylated. Phosphorylation affects subcellular location. Post-translationally, ubiquitinated: autoubiquitinates, possibly affecting its subcellular location. In terms of tissue distribution, predominantly expressed in skeletal muscle and heart.

The protein resides in the cytoplasm. It localises to the nucleus. It carries out the reaction S-ubiquitinyl-[E1 ubiquitin-activating enzyme]-L-cysteine + [acceptor protein]-L-lysine = [E1 ubiquitin-activating enzyme]-L-cysteine + N(6)-monoubiquitinyl-[acceptor protein]-L-lysine.. Its pathway is protein modification; protein ubiquitination. With respect to regulation, inhibited by phenylarsine oxide (PAO). In terms of biological role, E2/E3 hybrid ubiquitin-protein ligase that displays both E2 and E3 ligase activities and mediates monoubiquitination of target proteins. Negatively regulates TRAF6-mediated NF-kappa-B activation independently of its E2 activity. Acts as a positive regulator of BMP7 signaling by mediating monoubiquitination of SMAD6, thereby regulating adipogenesis. Mediates monoubiquitination at different sites of the nuclear localization signal (NLS) of BAP1, leading to cytoplasmic retention of BAP1. Also able to monoubiquitinate the NLS of other chromatin-associated proteins, such as INO80 and CXXC1, affecting their subcellular location. Acts as a regulator of retrograde transport by assisting the TRIM27:MAGEL2 E3 ubiquitin ligase complex to mediate 'Lys-63'-linked ubiquitination of WASHC1, leading to promote endosomal F-actin assembly. In Homo sapiens (Human), this protein is (E3-independent) E2 ubiquitin-conjugating enzyme (UBE2O).